The primary structure comprises 579 residues: MGVGTLLNGLLVSVVAALLWKYSKLSEHAALLEEELHMTRRSQELSQAHIDYHVALQALQEHGTRMVCTGKMHTDRICRFDYLCYCSEAEEFVFFHSNSSVMLPNLGSRRFQPALLDLSSVEDHNTQYFNFLELPAATLRFLPKPVFVPDVALILNRFNPDNLMHVFHDDLLPAFYTMKQFLDLDEDARLVFMEGWDEGPHFHLYRLLSDKQPLLKEQLRNFGKLMCFTKSYIGLSKMTTWYQYGFVQPQGPKANILVSGNEIRHFAKVLMEKMNVTRAEGGQEDEYIVVFSRSSTRLILNQAELVMALAQEFQMRVVTVSLEEQSFASIVQVIGAASMLVSMHGAQLITALFLPPGAVVVELFPFAVNPDQYTPYRTLAALPGMDLHYISWRNTEEENTITHPDRPWEQGGIAHLEKEEQERIVASKDVPRHLCCRNPEWLFRIYQDTFVDIPSFLEALQAGLKAKPVWKKSKLSGGLHPGRVRDARCQTSVQTSSEAKLTVSWQMPWNLKYLKVREVKYEVWIQEQGENTYMPYILPQQNYTFSDNIKPFTTYLVWVRCIFNKNLLGPFADVLMCRT.

Residues 1–4 (MGVG) are Cytoplasmic-facing. A helical; Signal-anchor for type II membrane protein transmembrane segment spans residues 5-25 (TLLNGLLVSVVAALLWKYSKL). Residues 26–579 (SEHAALLEEE…PFADVLMCRT (554 aa)) are Lumenal-facing. Asparagine 98, asparagine 275, and asparagine 542 each carry an N-linked (GlcNAc...) asparagine glycan. Residues 480–579 (HPGRVRDARC…PFADVLMCRT (100 aa)) form the Fibronectin type-III domain.

It belongs to the glycosyltransferase 61 family.

The protein localises to the endoplasmic reticulum membrane. It catalyses the reaction 3-O-(alpha-D-mannosyl)-L-threonyl-[protein] + UDP-N-acetyl-alpha-D-glucosamine = 3-O-(N-acetyl-beta-D-glucosaminyl-(1-&gt;4)-alpha-D-mannosyl)-L-threonyl-[protein] + UDP + H(+). The protein operates within protein modification; protein glycosylation. Functionally, O-linked mannose beta-1,4-N-acetylglucosaminyltransferase that transfers UDP-N-acetyl-D-glucosamine to the 4-position of the mannose to generate N-acetyl-D-glucosamine-beta-1,4-O-D-mannosylprotein. Involved in the biosynthesis of the phosphorylated O-mannosyl trisaccharide (N-acetylgalactosamine-beta-3-N-acetylglucosamine-beta-4-(phosphate-6-)mannose), a carbohydrate structure present in alpha-dystroglycan (DAG1), which is required for binding laminin G-like domain-containing extracellular proteins with high affinity. This chain is Protein O-linked-mannose beta-1,4-N-acetylglucosaminyltransferase 2 (pomgnt2), found in Tetraodon nigroviridis (Spotted green pufferfish).